Consider the following 750-residue polypeptide: Photosystem I P700 chlorophyll a apoprotein A1 (750 aa).

8 helical membrane-spanning segments follow: residues 70-93 (VFSA…FHGA), 156-179 (LYCT…FHYH), 195-219 (LNHH…HVSL), 291-309 (IAHH…GHMY), 346-369 (WHAQ…HHMY), 385-411 (LSLF…IFMV), 433-455 (AIIS…LYIH), and 531-549 (FLVH…LILL). Positions 573 and 582 each coordinate [4Fe-4S] cluster. 2 consecutive transmembrane segments (helical) span residues 589 to 610 (HVFL…HFSW) and 664 to 686 (LSAY…MFLF). His675 is a binding site for chlorophyll a'. Met683 and Tyr691 together coordinate chlorophyll a. A phylloquinone-binding site is contributed by Trp692. Residues 724–744 (AVGVTHYLLGGIATTWAFFLA) traverse the membrane as a helical segment.

It belongs to the PsaA/PsaB family. The PsaA/B heterodimer binds the P700 chlorophyll special pair and subsequent electron acceptors. PSI consists of a core antenna complex that captures photons, and an electron transfer chain that converts photonic excitation into a charge separation. The eukaryotic PSI reaction center is composed of at least 11 subunits. P700 is a chlorophyll a/chlorophyll a' dimer, A0 is one or more chlorophyll a, A1 is one or both phylloquinones and FX is a shared 4Fe-4S iron-sulfur center. serves as cofactor.

Its subcellular location is the plastid. The protein resides in the chloroplast thylakoid membrane. The enzyme catalyses reduced [plastocyanin] + hnu + oxidized [2Fe-2S]-[ferredoxin] = oxidized [plastocyanin] + reduced [2Fe-2S]-[ferredoxin]. Functionally, psaA and PsaB bind P700, the primary electron donor of photosystem I (PSI), as well as the electron acceptors A0, A1 and FX. PSI is a plastocyanin-ferredoxin oxidoreductase, converting photonic excitation into a charge separation, which transfers an electron from the donor P700 chlorophyll pair to the spectroscopically characterized acceptors A0, A1, FX, FA and FB in turn. Oxidized P700 is reduced on the lumenal side of the thylakoid membrane by plastocyanin. The protein is Photosystem I P700 chlorophyll a apoprotein A1 of Liriodendron tulipifera (Tuliptree).